Consider the following 126-residue polypeptide: Histone H2B type 1-K (126 aa).

The span at 1 to 12 (MPEPAKSAPAPK) shows a compositional bias: low complexity. The segment at 1–36 (MPEPAKSAPAPKKGSKKAVTKAQKKDGKKRKRSRKE) is disordered. Residue proline 2 is modified to N-acetylproline. Glutamate 3 carries the post-translational modification ADP-ribosyl glutamic acid. The residue at position 6 (lysine 6) is an N6-(2-hydroxyisobutyryl)lysine; alternate. Lysine 6 carries the N6-(beta-hydroxybutyryl)lysine; alternate modification. Lysine 6 is subject to N6-acetyllysine; alternate. Lysine 6 carries the N6-butyryllysine; alternate modification. An N6-crotonyllysine; alternate modification is found at lysine 6. Position 6 is an N6-lactoyllysine; alternate (lysine 6). Lysine 6 participates in a covalent cross-link: Glycyl lysine isopeptide (Lys-Gly) (interchain with G-Cter in SUMO2); alternate. Serine 7 bears the ADP-ribosylserine mark. The residue at position 12 (lysine 12) is an N6-(beta-hydroxybutyryl)lysine; alternate. 2 positions are modified to N6-acetyllysine; alternate: lysine 12 and lysine 13. 2 positions are modified to N6-crotonyllysine; alternate: lysine 12 and lysine 13. An N6-lactoyllysine; alternate modification is found at lysine 12. At lysine 13 the chain carries N6-(2-hydroxyisobutyryl)lysine; alternate. Phosphoserine; by STK4/MST1 is present on serine 15. Residues lysine 16, lysine 17, lysine 21, and lysine 24 each carry the N6-acetyllysine; alternate modification. An N6-crotonyllysine; alternate mark is found at lysine 16, lysine 17, lysine 21, and lysine 24. 4 positions are modified to N6-lactoyllysine; alternate: lysine 16, lysine 17, lysine 21, and lysine 24. Residues lysine 17 and lysine 21 each carry the N6-(beta-hydroxybutyryl)lysine; alternate modification. Position 17 is an N6-glutaryllysine; alternate (lysine 17). N6-(2-hydroxyisobutyryl)lysine; alternate is present on residues lysine 21 and lysine 24. An N6-butyryllysine; alternate modification is found at lysine 21. Residue lysine 21 forms a Glycyl lysine isopeptide (Lys-Gly) (interchain with G-Cter in SUMO2); alternate linkage. At lysine 25 the chain carries N6-(2-hydroxyisobutyryl)lysine. Lysine 35 carries the N6-(2-hydroxyisobutyryl)lysine; alternate modification. An N6-(beta-hydroxybutyryl)lysine; alternate modification is found at lysine 35. Lysine 35 carries the N6-crotonyllysine; alternate modification. Lysine 35 is modified (N6-glutaryllysine; alternate). Lysine 35 bears the N6-succinyllysine; alternate mark. Lysine 35 is covalently cross-linked (Glycyl lysine isopeptide (Lys-Gly) (interchain with G-Cter in ubiquitin); alternate). Glutamate 36 is modified (polyADP-ribosyl glutamic acid). At serine 37 the chain carries Phosphoserine; by AMPK. N6-(2-hydroxyisobutyryl)lysine; alternate occurs at positions 44, 47, and 58. Lysine 44 carries the N6-lactoyllysine; alternate modification. N6-glutaryllysine; alternate is present on residues lysine 44 and lysine 47. Position 47 is an N6-methyllysine; alternate (lysine 47). The residue at position 58 (lysine 58) is an N6,N6-dimethyllysine; alternate. Arginine 80 bears the Dimethylated arginine mark. Position 86 is an N6-(2-hydroxyisobutyryl)lysine; alternate (lysine 86). Lysine 86 carries the N6-(beta-hydroxybutyryl)lysine; alternate modification. Position 86 is an N6-acetyllysine; alternate (lysine 86). Lysine 86 is modified (N6-lactoyllysine; alternate). Lysine 86 is subject to N6,N6,N6-trimethyllysine; alternate. Arginine 87 and arginine 93 each carry omega-N-methylarginine. Lysine 109 carries the N6-(2-hydroxyisobutyryl)lysine; alternate modification. An N6-lactoyllysine; alternate modification is found at lysine 109. At lysine 109 the chain carries N6-glutaryllysine; alternate. The residue at position 109 (lysine 109) is an N6-methyllysine; alternate. The O-linked (GlcNAc) serine glycan is linked to serine 113. Phosphothreonine is present on threonine 116. Lysine 117 and lysine 121 each carry N6-(2-hydroxyisobutyryl)lysine; alternate. Residues lysine 117 and lysine 121 each carry the N6-(beta-hydroxybutyryl)lysine; alternate modification. An N6-lactoyllysine; alternate mark is found at lysine 117 and lysine 121. N6-glutaryllysine; alternate occurs at positions 117 and 121. 2 positions are modified to N6-succinyllysine; alternate: lysine 117 and lysine 121. Position 117 is an N6-malonyllysine; alternate (lysine 117). Lysine 117 carries the post-translational modification N6-methylated lysine; alternate. Residue lysine 121 forms a Glycyl lysine isopeptide (Lys-Gly) (interchain with G-Cter in ubiquitin); alternate linkage.

The protein belongs to the histone H2B family. In terms of assembly, the nucleosome is a histone octamer containing two molecules each of H2A, H2B, H3 and H4 assembled in one H3-H4 heterotetramer and two H2A-H2B heterodimers. The octamer wraps approximately 147 bp of DNA. Monoubiquitination at Lys-35 (H2BK34Ub) by the MSL1/MSL2 dimer is required for histone H3 'Lys-4' (H3K4me) and 'Lys-79' (H3K79me) methylation and transcription activation at specific gene loci, such as HOXA9 and MEIS1 loci. Similarly, monoubiquitination at Lys-121 (H2BK120Ub) by the RNF20/40 complex gives a specific tag for epigenetic transcriptional activation and is also prerequisite for histone H3 'Lys-4' and 'Lys-79' methylation. It also functions cooperatively with the FACT dimer to stimulate elongation by RNA polymerase II. H2BK120Ub also acts as a regulator of mRNA splicing: deubiquitination by USP49 is required for efficient cotranscriptional splicing of a large set of exons. In terms of processing, phosphorylation at Ser-37 (H2BS36ph) by AMPK in response to stress promotes transcription. Phosphorylated on Ser-15 (H2BS14ph) by STK4/MST1 during apoptosis; which facilitates apoptotic chromatin condensation. Also phosphorylated on Ser-15 in response to DNA double strand breaks (DSBs), and in correlation with somatic hypermutation and immunoglobulin class-switch recombination. Post-translationally, glcNAcylation at Ser-113 promotes monoubiquitination of Lys-121. It fluctuates in response to extracellular glucose, and associates with transcribed genes. ADP-ribosylated by PARP1 or PARP2 on Ser-7 (H2BS6ADPr) in response to DNA damage. H2BS6ADPr promotes recruitment of CHD1L. Mono-ADP-ribosylated on Glu-3 (H2BE2ADPr) by PARP3 in response to single-strand breaks. Poly ADP-ribosylation on Glu-36 (H2BE35ADPr) by PARP1 regulates adipogenesis: it inhibits phosphorylation at Ser-37 (H2BS36ph), thereby blocking expression of pro-adipogenetic genes. In terms of processing, crotonylation (Kcr) is specifically present in male germ cells and marks testis-specific genes in post-meiotic cells, including X-linked genes that escape sex chromosome inactivation in haploid cells. Crotonylation marks active promoters and enhancers and confers resistance to transcriptional repressors. It is also associated with post-meiotically activated genes on autosomes. Post-translationally, lactylated in macrophages by EP300/P300 by using lactoyl-CoA directly derived from endogenous or exogenous lactate, leading to stimulates gene transcription.

The protein resides in the nucleus. The protein localises to the chromosome. In terms of biological role, core component of nucleosome. Nucleosomes wrap and compact DNA into chromatin, limiting DNA accessibility to the cellular machineries which require DNA as a template. Histones thereby play a central role in transcription regulation, DNA repair, DNA replication and chromosomal stability. DNA accessibility is regulated via a complex set of post-translational modifications of histones, also called histone code, and nucleosome remodeling. Has broad antibacterial activity. May contribute to the formation of the functional antimicrobial barrier of the colonic epithelium, and to the bactericidal activity of amniotic fluid. This Homo sapiens (Human) protein is Histone H2B type 1-K.